The sequence spans 304 residues: Glycine--tRNA ligase alpha subunit (304 aa).

The protein belongs to the class-II aminoacyl-tRNA synthetase family. As to quaternary structure, tetramer of two alpha and two beta subunits.

The protein resides in the cytoplasm. The enzyme catalyses tRNA(Gly) + glycine + ATP = glycyl-tRNA(Gly) + AMP + diphosphate. In Serratia proteamaculans (strain 568), this protein is Glycine--tRNA ligase alpha subunit.